The primary structure comprises 156 residues: 3-hydroxyacyl-[acyl-carrier-protein] dehydratase FabZ (156 aa).

Histidine 57 is a catalytic residue.

The protein belongs to the thioester dehydratase family. FabZ subfamily.

The protein resides in the cytoplasm. The enzyme catalyses a (3R)-hydroxyacyl-[ACP] = a (2E)-enoyl-[ACP] + H2O. Involved in unsaturated fatty acids biosynthesis. Catalyzes the dehydration of short chain beta-hydroxyacyl-ACPs and long chain saturated and unsaturated beta-hydroxyacyl-ACPs. This chain is 3-hydroxyacyl-[acyl-carrier-protein] dehydratase FabZ, found in Anaeromyxobacter dehalogenans (strain 2CP-C).